Here is a 397-residue protein sequence, read N- to C-terminus: Homocysteine-responsive endoplasmic reticulum-resident ubiquitin-like domain member 2 protein (397 aa).

In terms of domain architecture, Ubiquitin-like spans 10-89 (VTLVIKAPNQ…HMVHLVCASR (80 aa)). Disordered regions lie at residues 87–166 (ASRS…MQGG) and 210–246 (APSP…PANP). Low complexity-rich tracts occupy residues 88–123 (SRSP…STPS) and 210–220 (APSPSLSAGPA). A helical membrane pass occupies residues 293 to 313 (FVMVIGAMLLVYLHQAGWFPF). The segment at 344–373 (DEGIEDDEGDSGEEGPDDPMNPGPHQPGFL) is disordered. Residues 345-360 (EGIEDDEGDSGEEGPD) are compositionally biased toward acidic residues.

The protein resides in the membrane. Could be involved in the unfolded protein response (UPR) pathway. The sequence is that of Homocysteine-responsive endoplasmic reticulum-resident ubiquitin-like domain member 2 protein (herpud2) from Danio rerio (Zebrafish).